Consider the following 196-residue polypeptide: Imidazole glycerol phosphate synthase subunit HisH (196 aa).

Residues 2–196 (NIVIIDTNCS…QQLVKNFLEI (195 aa)) enclose the Glutamine amidotransferase type-1 domain. The Nucleophile role is filled by Cys-77. Active-site residues include His-178 and Glu-180.

Heterodimer of HisH and HisF.

The protein resides in the cytoplasm. It catalyses the reaction 5-[(5-phospho-1-deoxy-D-ribulos-1-ylimino)methylamino]-1-(5-phospho-beta-D-ribosyl)imidazole-4-carboxamide + L-glutamine = D-erythro-1-(imidazol-4-yl)glycerol 3-phosphate + 5-amino-1-(5-phospho-beta-D-ribosyl)imidazole-4-carboxamide + L-glutamate + H(+). It carries out the reaction L-glutamine + H2O = L-glutamate + NH4(+). The protein operates within amino-acid biosynthesis; L-histidine biosynthesis; L-histidine from 5-phospho-alpha-D-ribose 1-diphosphate: step 5/9. IGPS catalyzes the conversion of PRFAR and glutamine to IGP, AICAR and glutamate. The HisH subunit catalyzes the hydrolysis of glutamine to glutamate and ammonia as part of the synthesis of IGP and AICAR. The resulting ammonia molecule is channeled to the active site of HisF. The polypeptide is Imidazole glycerol phosphate synthase subunit HisH (Blochmanniella pennsylvanica (strain BPEN)).